The primary structure comprises 35 residues: U14-ctenitoxin-Pn1a (35 aa).

3 cysteine pairs are disulfide-bonded: Cys-3/Cys-17, Cys-10/Cys-22, and Cys-16/Cys-32.

Expressed by the venom gland.

The protein resides in the secreted. Neurotoxin. This Phoneutria nigriventer (Brazilian armed spider) protein is U14-ctenitoxin-Pn1a.